We begin with the raw amino-acid sequence, 337 residues long: Large ribosomal subunit protein uL10 (337 aa).

Residues 309–337 are disordered; that stretch reads EEVVEEQEEVKEEEEEESDMASGLGALFG. Acidic residues predominate over residues 310–327; the sequence is EVVEEQEEVKEEEEEESD.

The protein belongs to the universal ribosomal protein uL10 family. As to quaternary structure, part of the 50S ribosomal subunit. Forms part of the ribosomal stalk which helps the ribosome interact with GTP-bound translation factors. Forms a heptameric L10(L12)2(L12)2(L12)2 complex, where L10 forms an elongated spine to which the L12 dimers bind in a sequential fashion.

Its function is as follows. Forms part of the ribosomal stalk, playing a central role in the interaction of the ribosome with GTP-bound translation factors. The protein is Large ribosomal subunit protein uL10 of Methanococcoides burtonii (strain DSM 6242 / NBRC 107633 / OCM 468 / ACE-M).